The chain runs to 635 residues: Extracellular metalloproteinase 1 (635 aa).

A signal peptide spans 1–19 (MHGLLLAAGLLSLPLHVLA). The propeptide occupies 20 to 246 (HPQPSTSTSL…VHNVVDYVAH (227 aa)). N-linked (GlcNAc...) asparagine glycosylation occurs at Asn-287. Zn(2+) is bound at residue His-430. Glu-431 is a catalytic residue. His-434 provides a ligand contact to Zn(2+). N-linked (GlcNAc...) asparagine glycans are attached at residues Asn-475, Asn-594, and Asn-623.

It belongs to the peptidase M36 family. Zn(2+) serves as cofactor.

The protein resides in the secreted. Secreted metalloproteinase probably acting as a virulence factor. The sequence is that of Extracellular metalloproteinase 1 (MEP1) from Trichophyton rubrum (Athlete's foot fungus).